Consider the following 70-residue polypeptide: DNA-directed RNA polymerase subunit omega (70 aa).

This sequence belongs to the RNA polymerase subunit omega family. As to quaternary structure, the RNAP catalytic core consists of 2 alpha, 1 beta, 1 beta' and 1 omega subunit. When a sigma factor is associated with the core the holoenzyme is formed, which can initiate transcription.

It carries out the reaction RNA(n) + a ribonucleoside 5'-triphosphate = RNA(n+1) + diphosphate. Promotes RNA polymerase assembly. Latches the N- and C-terminal regions of the beta' subunit thereby facilitating its interaction with the beta and alpha subunits. The sequence is that of DNA-directed RNA polymerase subunit omega from Caldanaerobacter subterraneus subsp. tengcongensis (strain DSM 15242 / JCM 11007 / NBRC 100824 / MB4) (Thermoanaerobacter tengcongensis).